The following is a 165-amino-acid chain: ATP synthase subunit b (165 aa).

Residues 10–30 (LIFWMLLSFGIVFAVLAKYGF) form a helical membrane-spanning segment.

Belongs to the ATPase B chain family. As to quaternary structure, F-type ATPases have 2 components, F(1) - the catalytic core - and F(0) - the membrane proton channel. F(1) has five subunits: alpha(3), beta(3), gamma(1), delta(1), epsilon(1). F(0) has three main subunits: a(1), b(2) and c(10-14). The alpha and beta chains form an alternating ring which encloses part of the gamma chain. F(1) is attached to F(0) by a central stalk formed by the gamma and epsilon chains, while a peripheral stalk is formed by the delta and b chains.

It is found in the cell inner membrane. Functionally, f(1)F(0) ATP synthase produces ATP from ADP in the presence of a proton or sodium gradient. F-type ATPases consist of two structural domains, F(1) containing the extramembraneous catalytic core and F(0) containing the membrane proton channel, linked together by a central stalk and a peripheral stalk. During catalysis, ATP synthesis in the catalytic domain of F(1) is coupled via a rotary mechanism of the central stalk subunits to proton translocation. Its function is as follows. Component of the F(0) channel, it forms part of the peripheral stalk, linking F(1) to F(0). The sequence is that of ATP synthase subunit b from Bacteroides fragilis (strain ATCC 25285 / DSM 2151 / CCUG 4856 / JCM 11019 / LMG 10263 / NCTC 9343 / Onslow / VPI 2553 / EN-2).